The following is a 284-amino-acid chain: uncharacterized protein (284 aa).

The C3H1-type zinc finger occupies N37–S65.

This is an uncharacterized protein from Acanthamoeba polyphaga (Amoeba).